The sequence spans 70 residues: Beta-defensin 107 (70 aa).

A signal peptide spans 1 to 26 (MPGAMKIFVFILAALILLAQIFQART). 2 disulfides stabilise this stretch: C41/C55 and C45/C64.

This sequence belongs to the beta-defensin family. As to expression, specifically expressed in testis.

It is found in the secreted. Functionally, has antibacterial activity. The chain is Beta-defensin 107 (DEFB107A) from Homo sapiens (Human).